The following is a 185-amino-acid chain: Peptidyl-tRNA hydrolase (185 aa).

A tRNA-binding site is contributed by tyrosine 14. Histidine 19 serves as the catalytic Proton acceptor. The tRNA site is built by tyrosine 64, asparagine 66, and asparagine 112.

It belongs to the PTH family. Monomer.

It localises to the cytoplasm. The enzyme catalyses an N-acyl-L-alpha-aminoacyl-tRNA + H2O = an N-acyl-L-amino acid + a tRNA + H(+). Hydrolyzes ribosome-free peptidyl-tRNAs (with 1 or more amino acids incorporated), which drop off the ribosome during protein synthesis, or as a result of ribosome stalling. Its function is as follows. Catalyzes the release of premature peptidyl moieties from peptidyl-tRNA molecules trapped in stalled 50S ribosomal subunits, and thus maintains levels of free tRNAs and 50S ribosomes. The chain is Peptidyl-tRNA hydrolase from Ligilactobacillus salivarius (strain UCC118) (Lactobacillus salivarius).